Here is a 382-residue protein sequence, read N- to C-terminus: uncharacterized protein (382 aa).

The next 12 membrane-spanning stretches (helical) occupy residues 14 to 34 (GLLLLTLAIAVLNTLVPLWLA), 45 to 65 (MVSSSYFTGNLVGTLLTGYLI), 79 to 99 (LVFAAGCLGLGLMIGFWSWMA), 102 to 122 (FVAGVGCAMIWVVVESALMCS), 131 to 151 (LLAAYMMIYYVGTFLGQLLVS), 157 to 177 (LMNVLPWVTALILAGILPLLF), 204 to 224 (LGVNGCIISGIVLGSLYGLMP), 236 to 256 (NIGFWMAVLVSAGIVGQWPIG), 265 to 285 (LLVLRVQIFVVILGSIAMLTH), 289 to 309 (APALFILGAAGFTLYPVAMAW), 325 to 345 (ALLLSYTIGSLLGPSFTAMLM), and 349 to 369 (SDNLLFIMIASVSFIYLLMLL).

It belongs to the major facilitator superfamily. YcaD (TC 2.A.1.26) family.

It localises to the cell inner membrane. This is an uncharacterized protein from Escherichia fergusonii (strain ATCC 35469 / DSM 13698 / CCUG 18766 / IAM 14443 / JCM 21226 / LMG 7866 / NBRC 102419 / NCTC 12128 / CDC 0568-73).